We begin with the raw amino-acid sequence, 179 residues long: Stathmin-2 (179 aa).

A membrane attachment region spans residues 1–26 (MAKTAMAYKEKMKELSMLSLICSCFY). Ser-16 is modified (phosphoserine). Residues Cys-22 and Cys-24 are each lipidated (S-palmitoyl cysteine). Residues 38 to 179 (DDMEVKQINK…NKELQVELSG (142 aa)) enclose the SLD domain. The tract at residues 39 to 96 (DMEVKQINKRASGQAFELILKPPSPISEAPRTLASPKKKDLSLEEIQKKLEAAEERRK) is regulatory/phosphorylation domain. Phosphoserine occurs at positions 50, 62, 73, and 97. Positions 75-179 (KKKDLSLEEI…NKELQVELSG (105 aa)) form a coiled coil.

It belongs to the stathmin family. As to quaternary structure, interacts with MAPK8. Interacts with ITM2C. Interacts with KIFBP. Interacts (via the N-terminal region) with CIB1 (via C-terminal region); the interaction is direct, occurs in a calcium-dependent manner and attenuates the neurite outgrowth inhibition of STMN2. Sumoylated. In terms of processing, phosphorylated mostly by MAPK8, but also by MAPK9 and MAPK10 in the developing brain cortex. Post-translationally, N-terminal palmitoylation promotes specific anchoring to the cytosolic leaflet of Golgi membranes and subsequent vesicular trafficking along dendrites and axons. Neuronal Stathmins are substrates for palmitoyltransferases ZDHHC3, ZDHHC7 and ZDHHC15. As to expression, neuron specific.

Its subcellular location is the cytoplasm. It localises to the perinuclear region. The protein resides in the cell projection. The protein localises to the growth cone. It is found in the membrane. Its subcellular location is the axon. It localises to the golgi apparatus. The protein resides in the endosome. The protein localises to the lamellipodium. Functionally, regulator of microtubule stability. When phosphorylated by MAPK8, stabilizes microtubules and consequently controls neurite length in cortical neurons. In the developing brain, negatively regulates the rate of exit from multipolar stage and retards radial migration from the ventricular zone. This is Stathmin-2 (STMN2) from Homo sapiens (Human).